A 215-amino-acid polypeptide reads, in one-letter code: Large ribosomal subunit protein uL16 (215 aa).

Belongs to the universal ribosomal protein uL16 family. As to quaternary structure, component of the large ribosomal subunit.

It is found in the cytoplasm. Its function is as follows. Component of the large ribosomal subunit. Plays a role in the formation of actively translating ribosomes. Plays a role in the embryonic brain development. This chain is Large ribosomal subunit protein uL16, found in Danio rerio (Zebrafish).